The chain runs to 1141 residues: DNA-directed RNA polymerase subunit beta (1141 aa).

Residues 1117-1141 (GINISREEPPGQLDDTPDTFSRGGM) are disordered.

This sequence belongs to the RNA polymerase beta chain family. The RNAP catalytic core consists of 2 alpha, 1 beta, 1 beta' and 1 omega subunit. When a sigma factor is associated with the core the holoenzyme is formed, which can initiate transcription.

The enzyme catalyses RNA(n) + a ribonucleoside 5'-triphosphate = RNA(n+1) + diphosphate. DNA-dependent RNA polymerase catalyzes the transcription of DNA into RNA using the four ribonucleoside triphosphates as substrates. This Rubrobacter xylanophilus (strain DSM 9941 / JCM 11954 / NBRC 16129 / PRD-1) protein is DNA-directed RNA polymerase subunit beta.